A 396-amino-acid polypeptide reads, in one-letter code: MRNMQEKGVSEKEILEELKKYRSLDLKYEDGNIFGSMCSNVLPITRKIVDIFLETNLGDPGLFKGTKLLEEKAVALLGSLLNNKDAYGHIVSGGTEANLMALRCIKNIWREKRRKGLSKNEHPKIIVPITAHFSFEKGREMMDLEYIYAPIKEDYTIDEKFVKDAVEDYDVDGIIGIAGTTELGTIDNIEELSKIAKENNIYIHVDAAFGGLVIPFLDDKYKKKGVNYKFDFSLGVDSITIDPHKMGHCPIPSGGILFKDIGYKRYLDVDAPYLTETRQATILGTRVGFGGACTYAVLRYLGREGQRKIVNECMENTLYLYKKLKENNFKPVIEPILNIVAIEDEDYKEVCKKLRDRGIYVSVCNCVKALRIVVMPHIKREHIDNFIEILNSIKRD.

Lys-245 is modified (N6-(pyridoxal phosphate)lysine).

The protein belongs to the group II decarboxylase family. MfnA subfamily. In terms of assembly, homodimer. Pyridoxal 5'-phosphate serves as cofactor.

The catalysed reaction is L-tyrosine + H(+) = tyramine + CO2. It carries out the reaction L-aspartate + H(+) = beta-alanine + CO2. It participates in cofactor biosynthesis; methanofuran biosynthesis. Its pathway is cofactor biosynthesis; coenzyme A biosynthesis. Its activity is regulated as follows. Inhibited by hydroxylamine and O-methylhydroxylamine. In terms of biological role, catalyzes the decarboxylation of L-tyrosine to produce tyramine for methanofuran biosynthesis. Can also catalyze the decarboxylation of L-aspartate to produce beta-alanine for coenzyme A (CoA) biosynthesis. The polypeptide is L-tyrosine/L-aspartate decarboxylase (Methanocaldococcus jannaschii (strain ATCC 43067 / DSM 2661 / JAL-1 / JCM 10045 / NBRC 100440) (Methanococcus jannaschii)).